Here is a 524-residue protein sequence, read N- to C-terminus: MSAVLKQRIRYKPYLDKIRTAAQCVDLFGAKPNQYIGWSGFTGVGAPKVVPDAVSKHVEENNLQGHENWRYNLFVGASAGMEIESRWANNNMIARRSPHQVGKPIAAAINEGRTDFFDKHLSMWAQDLTYGFYTRDKKENSLDIAVIEATAITEDGHLIPGPAVGASPEIVHMADKIIIELNTKTPSFEGLHDINMPVLPPFRQPYQITDVSQKMGTPYIPLDPSKVVAIVESEFADVVGANSPADEGSKAIAANLIELFQQEVKAGRLPENLLPLQSGIGNIANAVVEGLADASFKDLNVWTEVLQDSFLDFFESGNLNFATATSIRLTEDGFKRFFDNWDEFSKKLLLRSQVVSNNPEIIRRLGVIAMNTPVEVDIYAHANSTCVNGSKMLHGLGGSGDFLRNAKLSIMHTPSARPSKTDPLGISCIVPFATHIDQTEHDLDIVVTEQGLADLRGLSPKERSREMINKCAHPSYRDQLLAYVEQAEFECAKSRSLHEPHVLKNAFKMHTNLAENGTMRLDKW.

Glycine 279–isoleucine 283 contributes to the CoA binding site. The active-site 5-glutamyl coenzyme A thioester intermediate is the glutamate 304. CoA is bound at residue glycine 398.

It belongs to the acetyl-CoA hydrolase/transferase family.

Its subcellular location is the cytoplasm. It catalyses the reaction acetyl-CoA + H2O = acetate + CoA + H(+). Functionally, presumably involved in regulating the intracellular acetyl-CoA pool for fatty acid and cholesterol synthesis and fatty acid oxidation. The protein is Acetyl-CoA hydrolase (ACH1) of Yarrowia lipolytica (strain CLIB 122 / E 150) (Yeast).